The primary structure comprises 207 residues: Claudin-11 (207 aa).

Methionine 1 is a topological domain (cytoplasmic). Residues 2–22 (VATCLQVVGFVTSFVGWIGVI) form a helical membrane-spanning segment. Over 23 to 82 (VTTSTNDWVVTCGYTIPTCRKLDELGSKGLWADCVMATGLYHCKPLVDILILPGYVQACR) the chain is Extracellular. Residues 83–103 (ALMIAASVLGLPAILLLLTVL) traverse the membrane as a helical segment. Residues 104-122 (PCIRMGHEPGVAKYRRAQL) lie on the Cytoplasmic side of the membrane. The helical transmembrane segment at 123–143 (AGVLLILLALCAIVATIWFPV) threads the bilayer. Over 144-157 (CAHRETTIVSFGYS) the chain is Extracellular. A helical transmembrane segment spans residues 158 to 178 (LYAGWIGAVLCLVGGCVILCC). The Cytoplasmic portion of the chain corresponds to 179–207 (AGDAQAFGENRFYYSSGSSSPTHAKSAHV). Serine 193, serine 194, serine 197, and serine 198 each carry phosphoserine.

It belongs to the claudin family. Interacts with tetraspanin-3/TSPAN3. Interacts with OCLN.

The protein localises to the cell junction. The protein resides in the tight junction. It localises to the cell membrane. Functionally, plays a major role in tight junction-specific obliteration of the intercellular space, through calcium-independent cell-adhesion activity. The sequence is that of Claudin-11 (CLDN11) from Macaca fascicularis (Crab-eating macaque).